A 300-amino-acid chain; its full sequence is F-box/LRR-repeat protein 15 (300 aa).

Methionine 1 carries the N-acetylmethionine modification. Residues leucine 19–aspartate 66 form the F-box domain. The interaction with SMURF1 stretch occupies residues asparagine 113–arginine 269. LRR repeat units follow at residues arginine 141–alanine 162, alanine 167–alanine 188, glycine 194–alanine 215, glutamine 220–alanine 241, and alanine 246–arginine 267.

Belongs to the FBXL15 family. As to quaternary structure, part of the SCF (SKP1-CUL1-F-box) E3 ubiquitin-protein ligase complex SCF(FBXL15) composed of CUL1, SKP1, RBX1 and FBXL15.

It is found in the cytoplasm. The protein operates within protein modification; protein ubiquitination. Its function is as follows. Substrate recognition component of a SCF (SKP1-CUL1-F-box protein) E3 ubiquitin-protein ligase complex which mediates the ubiquitination and subsequent proteasomal degradation of SMURF1, thereby acting as a positive regulator of the BMP signaling pathway. Required for dorsal/ventral pattern formation. Also mediates ubiquitination of SMURF2 and WWP2. Required for bone mass maintenance. This Rattus norvegicus (Rat) protein is F-box/LRR-repeat protein 15 (Fbxl15).